Consider the following 134-residue polypeptide: U34-theraphotoxin-Cg1a (134 aa).

Positions methionine 1 to serine 19 are cleaved as a signal peptide. 3 disulfide bridges follow: cysteine 24/cysteine 35, cysteine 29/cysteine 53, and cysteine 63/cysteine 84. The interval glutamate 97–lysine 134 is disordered. The segment covering serine 99 to lysine 134 has biased composition (low complexity).

The protein belongs to the neurotoxin 32 family. In terms of tissue distribution, expressed by the venom gland.

Its subcellular location is the secreted. This Chilobrachys guangxiensis (Chinese earth tiger tarantula) protein is U34-theraphotoxin-Cg1a.